Here is a 233-residue protein sequence, read N- to C-terminus: Ribosomal RNA small subunit methyltransferase G (233 aa).

Residues Gly-91, Met-96, 142–143 (VE), and Arg-157 contribute to the S-adenosyl-L-methionine site.

The protein belongs to the methyltransferase superfamily. RNA methyltransferase RsmG family.

The protein resides in the cytoplasm. It carries out the reaction guanosine(527) in 16S rRNA + S-adenosyl-L-methionine = N(7)-methylguanosine(527) in 16S rRNA + S-adenosyl-L-homocysteine. Functionally, specifically methylates the N7 position of guanine in position 527 of 16S rRNA. The protein is Ribosomal RNA small subunit methyltransferase G of Cupriavidus necator (strain ATCC 17699 / DSM 428 / KCTC 22496 / NCIMB 10442 / H16 / Stanier 337) (Ralstonia eutropha).